Consider the following 884-residue polypeptide: Bifunctional heparan sulfate N-deacetylase/N-sulfotransferase 2 (884 aa).

Residues 1 to 18 are Cytoplasmic-facing; it reads MLKLWKVVRPARQLELHR. The chain crosses the membrane as a helical; Signal-anchor for type II membrane protein span at residues 19 to 39; the sequence is LILLLIAFSLGSMGFLAYYVS. The Lumenal portion of the chain corresponds to 40–884; it reads TSPKAKEPLP…REELQHSSSG (845 aa). Residues 41–598 are heparan sulfate N-deacetylase 2; it reads SPKAKEPLPL…KRHKDIWSKE (558 aa). The segment at 49 to 82 is disordered; the sequence is PLPLGDCSSSGAAGGPGPVRPPVPPRPPRPPETA. Over residues 66-79 the composition is skewed to pro residues; sequence PVRPPVPPRPPRPP. Asn351 and Asn401 each carry an N-linked (GlcNAc...) asparagine glycan. The interval 599 to 884 is heparan sulfate N-sulfotransferase 2; the sequence is KTCDRLPKFL…REELQHSSSG (286 aa). The active-site For sulfotransferase activity is Lys614. 614–618 lines the 3'-phosphoadenylyl sulfate pocket; the sequence is KTGTT. N-linked (GlcNAc...) asparagine glycosylation is present at Asn667. A 3'-phosphoadenylyl sulfate-binding site is contributed by Ser712. 2 N-linked (GlcNAc...) asparagine glycosylation sites follow: Asn727 and Asn803. The cysteines at positions 818 and 828 are disulfide-linked. 833 to 837 provides a ligand contact to 3'-phosphoadenylyl sulfate; sequence KGRKY.

It belongs to the sulfotransferase 1 family. NDST subfamily. As to quaternary structure, monomer.

The protein resides in the golgi apparatus membrane. It catalyses the reaction alpha-D-glucosaminyl-[heparan sulfate](n) + 3'-phosphoadenylyl sulfate = N-sulfo-alpha-D-glucosaminyl-[heparan sulfate](n) + adenosine 3',5'-bisphosphate + 2 H(+). The protein operates within glycan metabolism; heparan sulfate biosynthesis. It functions in the pathway glycan metabolism; heparin biosynthesis. Essential bifunctional enzyme that catalyzes both the N-deacetylation and the N-sulfation of glucosamine (GlcNAc) of the glycosaminoglycan in heparan sulfate. Modifies the GlcNAc-GlcA disaccharide repeating sugar backbone to make N-sulfated heparosan, a prerequisite substrate for later modifications in heparin biosynthesis. Plays a role in determining the extent and pattern of sulfation of heparan sulfate. Required for the exosomal release of SDCBP, CD63 and syndecan. This chain is Bifunctional heparan sulfate N-deacetylase/N-sulfotransferase 2 (NDST2), found in Bos taurus (Bovine).